The sequence spans 173 residues: Acireductone dioxygenase (173 aa).

A disordered region spans residues 1–20 (MKVYEYDNSTEDQREDHDSG). Residues histidine 81, histidine 83, glutamate 87, and histidine 126 each coordinate Fe(2+). Residues histidine 81, histidine 83, glutamate 87, and histidine 126 each contribute to the Ni(2+) site.

The protein belongs to the acireductone dioxygenase (ARD) family. Requires Fe(2+) as cofactor. Ni(2+) serves as cofactor.

Its subcellular location is the cytoplasm. The protein localises to the nucleus. The catalysed reaction is 1,2-dihydroxy-5-(methylsulfanyl)pent-1-en-3-one + O2 = 4-methylsulfanyl-2-oxobutanoate + formate + 2 H(+). It carries out the reaction 1,2-dihydroxy-5-(methylsulfanyl)pent-1-en-3-one + O2 = 3-(methylsulfanyl)propanoate + CO + formate + 2 H(+). The protein operates within amino-acid biosynthesis; L-methionine biosynthesis via salvage pathway; L-methionine from S-methyl-5-thio-alpha-D-ribose 1-phosphate: step 5/6. Catalyzes 2 different reactions between oxygen and the acireductone 1,2-dihydroxy-3-keto-5-methylthiopentene (DHK-MTPene) depending upon the metal bound in the active site. Fe-containing acireductone dioxygenase (Fe-ARD) produces formate and 2-keto-4-methylthiobutyrate (KMTB), the alpha-ketoacid precursor of methionine in the methionine recycle pathway. Ni-containing acireductone dioxygenase (Ni-ARD) produces methylthiopropionate, carbon monoxide and formate, and does not lie on the methionine recycle pathway. This is Acireductone dioxygenase from Tuber melanosporum (strain Mel28) (Perigord black truffle).